We begin with the raw amino-acid sequence, 247 residues long: Adenosylcobinamide-GDP ribazoletransferase (247 aa).

Helical transmembrane passes span 34-54 (IVMF…IFIL), 59-79 (CGIP…TGGF), 113-133 (GGLA…ELAL), 138-158 (VLAA…LLMY), and 194-214 (VLLP…AIFI).

This sequence belongs to the CobS family. Mg(2+) serves as cofactor.

The protein localises to the cell inner membrane. The enzyme catalyses alpha-ribazole + adenosylcob(III)inamide-GDP = adenosylcob(III)alamin + GMP + H(+). It catalyses the reaction alpha-ribazole 5'-phosphate + adenosylcob(III)inamide-GDP = adenosylcob(III)alamin 5'-phosphate + GMP + H(+). It functions in the pathway cofactor biosynthesis; adenosylcobalamin biosynthesis; adenosylcobalamin from cob(II)yrinate a,c-diamide: step 7/7. Its function is as follows. Joins adenosylcobinamide-GDP and alpha-ribazole to generate adenosylcobalamin (Ado-cobalamin). Also synthesizes adenosylcobalamin 5'-phosphate from adenosylcobinamide-GDP and alpha-ribazole 5'-phosphate. This is Adenosylcobinamide-GDP ribazoletransferase from Salmonella arizonae (strain ATCC BAA-731 / CDC346-86 / RSK2980).